The primary structure comprises 1212 residues: Peregrin (1212 aa).

The segment at 21-47 (YECPVETCRKVYKSYSGIEYHLYHYDH) adopts a C2H2-type zinc-finger fold. Disordered regions lie at residues 43-87 (YHYD…SPGR) and 118-176 (VVSE…PKLP). Over residues 58 to 67 (LRKHKKKGRQ) the composition is skewed to basic residues. Residues 59 to 221 (RKHKKKGRQS…VEYDMDEEDY (163 aa)) are interaction with KAT6A and KAT6B. Positions 74–85 (QSPSPSEVSQSP) are enriched in low complexity. Over residues 119–130 (VSEDEEAPEEAP) the composition is skewed to acidic residues. Phosphoserine is present on Ser120. Lys147 bears the N6-acetyllysine mark. Basic residues predominate over residues 148 to 166 (SGKHKNKEKRKDSNHHHHS). A Phosphoserine modification is found at Ser237. The PHD-type 1 zinc-finger motif lies at 272–322 (DAVCCICNDGECQNSNVILFCDMCNLAVHQECYGVPYIPEGQWLCRRCLQS). A C2HC pre-PHD-type zinc finger spans residues 326-359 (AVDCALCPNKGGAFKQTDDGRWAHVVCALWIPEV). The PHD-type 2 zinc finger occupies 383 to 447 (LTCYICKQRG…RKTAYCDIHT (65 aa)). Positions 447 to 489 (TPPGSARRLPALSHSEGEEEEDEEEDEGKSWSSEKVKKAKAKS) are disordered. Ser459 and Ser461 each carry phosphoserine. The segment covering 463–473 (GEEEEDEEEDE) has biased composition (acidic residues). An interaction with MEAF6 and ING5 region spans residues 500-819 (LAEKRAAAPV…IKKEMTALRR (320 aa)). Residues 542–1077 (YWTLKRQSRN…RGAGWLSEDE (536 aa)) are required for RUNX1 and RUNX2 transcriptional activation. Lys579 bears the N6-acetyllysine mark. The region spanning 627 to 731 (MQLTPFLILL…EQGGAVLRQA (105 aa)) is the Bromo domain. The interval 817-1060 (LRRKLAHQRE…VGTGRGVGHS (244 aa)) is disordered. Residues 823–836 (HQRETGRDGPERHG) show a composition bias toward basic and acidic residues. Phosphothreonine is present on Thr856. Low complexity predominate over residues 856 to 869 (TDSAAEESSSQETS). Residues Ser858, Ser915, Ser920, and Ser924 each carry the phosphoserine modification. The span at 993-1019 (PRSSSDSESSSSSSSSAASDRTSTTPS) shows a compositional bias: low complexity. Ser1074 carries the phosphoserine modification. The PWWP domain occupies 1083 to 1166 (ALDLVWAKCR…RTKLVPLGVN (84 aa)). Ser1185 is modified (phosphoserine).

As to quaternary structure, component of some HBO1 complex composed of KAT7/HBO1, MEAF6, ING5, and BRPF1. Component of the MOZ/MORF complex composed at least of ING5, KAT6A, KAT6B, MEAF6 and one of BRPF1, BRD1/BRPF2 and BRPF3. Interacts (via PHD-type zinc finger domains) with unmethylated histone H3 at 'Lys-4' (H3K4me0). Interacts with trimethylated 'Lys-36' of histone H3 (H3K36me3). Interacts with ING5; interaction directs BRPF1 to H4K4me3-enriched chromatin at the 5' of active genes. Interacts with KAT7. Acetylated by KAT6A. Expressed at low level in most tissues, with high expression in the testis and specific regions of the brain.

The protein localises to the nucleus. It is found in the chromosome. The protein resides in the cytoplasm. Functionally, scaffold subunit of various histone acetyltransferase (HAT) complexes, such as the MOZ/MORF and HBO1 complexes, which have a histone H3 acetyltransferase activity. Plays a key role in HBO1 complex by directing KAT7/HBO1 specificity towards histone H3 'Lys-14' acetylation (H3K14ac). Some HAT complexes preferentially mediate histone H3 'Lys-23' (H3K23ac) acetylation. Positively regulates the transcription of RUNX1 and RUNX2. The chain is Peregrin from Mus musculus (Mouse).